The chain runs to 473 residues: Zinc finger and BTB domain-containing protein 9 (473 aa).

Positions 48–112 constitute a BTB domain; the sequence is CDVSLLVQGR…IYSGRLRLPL (65 aa). Residues 177–279 are disordered; it reads QTPVQSSAST…LELPAPPALP (103 aa). The span at 182-196 shows a compositional bias: low complexity; the sequence is SSASTESPASTESPV. A compositionally biased stretch (acidic residues) spans 211–226; that stretch reads VEEEEEEEEDDDDEDQ. Residues 227 to 239 show a composition bias toward polar residues; that stretch reads GSATLSQTPQPQR. Residue K286 forms a Glycyl lysine isopeptide (Lys-Gly) (interchain with G-Cter in SUMO1); alternate linkage. K286 participates in a covalent cross-link: Glycyl lysine isopeptide (Lys-Gly) (interchain with G-Cter in SUMO2); alternate. Residues K293 and K307 each participate in a glycyl lysine isopeptide (Lys-Gly) (interchain with G-Cter in SUMO2) cross-link. Residues 293–376 form a disordered region; the sequence is KEEISGSGTQ…VHGPVKLGGT (84 aa). Over residues 355–364 the composition is skewed to gly residues; the sequence is SGGGGPGGAG. K382 participates in a covalent cross-link: Glycyl lysine isopeptide (Lys-Gly) (interchain with G-Cter in SUMO2). The segment at 411–433 adopts a C2H2-type 1 zinc-finger fold; sequence FGCGICNKRFKLKHHLTEHMKTH. The C2H2-type 2; atypical zinc finger occupies 438-460; sequence HACPHCGRRFRVHACFLRHRDLC.

The protein localises to the nucleus. Its function is as follows. May be involved in transcriptional regulation. The protein is Zinc finger and BTB domain-containing protein 9 (ZBTB9) of Homo sapiens (Human).